Consider the following 473-residue polypeptide: Bifunctional protein GlmU (473 aa).

The tract at residues 1-226 is pyrophosphorylase; the sequence is MRAPVAVVIL…AGEASGINDL (226 aa). UDP-N-acetyl-alpha-D-glucosamine is bound by residues 10-13, lysine 24, glutamine 75, 80-81, 102-104, glycine 136, glutamate 151, asparagine 166, and asparagine 224; these read LAAG, GT, and YGD. A Mg(2+)-binding site is contributed by aspartate 104. Residue asparagine 224 coordinates Mg(2+). Residues 227–247 are linker; it reads VQLAEVEEAFQRRWARRLLQG. Residues 248–473 are N-acetyltransferase; that stretch reads GLRLVAPHRF…TPASGGAKEE (226 aa). Residues arginine 330 and lysine 348 each coordinate UDP-N-acetyl-alpha-D-glucosamine. Catalysis depends on histidine 360, which acts as the Proton acceptor. The UDP-N-acetyl-alpha-D-glucosamine site is built by tyrosine 363 and asparagine 374. Acetyl-CoA is bound by residues alanine 377, 383-384, serine 402, alanine 420, and arginine 437; that span reads NY. The tract at residues 439–473 is disordered; that stretch reads RARTIPGWQHPGLTGRRGPPDDNDATPASGGAKEE.

In the N-terminal section; belongs to the N-acetylglucosamine-1-phosphate uridyltransferase family. It in the C-terminal section; belongs to the transferase hexapeptide repeat family. In terms of assembly, homotrimer. The cofactor is Mg(2+).

The protein resides in the cytoplasm. It carries out the reaction alpha-D-glucosamine 1-phosphate + acetyl-CoA = N-acetyl-alpha-D-glucosamine 1-phosphate + CoA + H(+). It catalyses the reaction N-acetyl-alpha-D-glucosamine 1-phosphate + UTP + H(+) = UDP-N-acetyl-alpha-D-glucosamine + diphosphate. The protein operates within nucleotide-sugar biosynthesis; UDP-N-acetyl-alpha-D-glucosamine biosynthesis; N-acetyl-alpha-D-glucosamine 1-phosphate from alpha-D-glucosamine 6-phosphate (route II): step 2/2. It functions in the pathway nucleotide-sugar biosynthesis; UDP-N-acetyl-alpha-D-glucosamine biosynthesis; UDP-N-acetyl-alpha-D-glucosamine from N-acetyl-alpha-D-glucosamine 1-phosphate: step 1/1. Its pathway is bacterial outer membrane biogenesis; LPS lipid A biosynthesis. In terms of biological role, catalyzes the last two sequential reactions in the de novo biosynthetic pathway for UDP-N-acetylglucosamine (UDP-GlcNAc). The C-terminal domain catalyzes the transfer of acetyl group from acetyl coenzyme A to glucosamine-1-phosphate (GlcN-1-P) to produce N-acetylglucosamine-1-phosphate (GlcNAc-1-P), which is converted into UDP-GlcNAc by the transfer of uridine 5-monophosphate (from uridine 5-triphosphate), a reaction catalyzed by the N-terminal domain. This chain is Bifunctional protein GlmU, found in Halorhodospira halophila (strain DSM 244 / SL1) (Ectothiorhodospira halophila (strain DSM 244 / SL1)).